The following is a 266-amino-acid chain: Type II iodothyronine deiodinase (266 aa).

The Lumenal portion of the chain corresponds to 1-9 (MGLLSVDLL). Residues 10-34 (ITLQILPVFFSNCLFLALYDSVILL) traverse the membrane as a helical; Signal-anchor for type III membrane protein segment. Topologically, residues 35 to 266 (KHVALLLSRS…KNFSKRUILD (232 aa)) are cytoplasmic. Sec130 is an active-site residue. 2 non-standard amino acids (selenocysteine) are found at residues Sec130 and Sec263.

The protein belongs to the iodothyronine deiodinase family. As to quaternary structure, predominantly monomer. Can form homodimers but homodimerization is not essential for enzyme activity. Interacts with USP20 and USP33. Interacts with MARCHF6. In terms of processing, ubiquitinated by MARCHF6, leading to its degradation by the proteasome. Deubiquitinated by USP20 and USP33. In terms of tissue distribution, expressed in mammary gland and in brain.

The protein resides in the endoplasmic reticulum membrane. The catalysed reaction is 3,3',5-triiodo-L-thyronine + iodide + A + H(+) = L-thyroxine + AH2. It catalyses the reaction 3,3'-diiodo-L-thyronine + iodide + A + H(+) = 3,3',5'-triiodo-L-thyronine + AH2. The enzyme catalyses 3'-iodo-L-thyronine + iodide + A + H(+) = 3',5'-diiodo-L-thyronine + AH2. It carries out the reaction 3,3'-diiodothyronamine + iodide + A + H(+) = 3,3',5'-triiodothyronamine + AH2. The catalysed reaction is 3'-iodothyronamine + iodide + A + H(+) = 3',5'-diiodothyronamine + AH2. Plays a crucial role in the metabolism of thyroid hormones (TH) and has specific roles in TH activation and inactivation by deiodination. Catalyzes the deiodination of L-thyroxine (T4) to 3,5,3'-triiodothyronine (T3) and 3,3',5'-triiodothyronine (rT3) to 3,3'-diiodothyronine (3,3'-T2) via outer-ring deiodination (ORD). Catalyzes the deiodination of 3',5'-diiodothyronine (3',5'-T2) to 3'-monoiodothyronine (3'-T1) via ORD. Catalyzes the phenolic ring deiodinations of 3,3',5'-triiodothyronamine and 3',5'- diiodothyronamine. The polypeptide is Type II iodothyronine deiodinase (Dio2) (Mus musculus (Mouse)).